A 744-amino-acid chain; its full sequence is NADH-ubiquinone oxidoreductase 78 kDa subunit, mitochondrial (744 aa).

Residues 1–10 (MLRSTLSRSA) show a composition bias toward polar residues. The tract at residues 1–26 (MLRSTLSRSAWRTGRHQAARNASRAF) is disordered. Residues 1–33 (MLRSTLSRSAWRTGRHQAARNASRAFSATAQRP) constitute a mitochondrion transit peptide. The 2Fe-2S ferredoxin-type domain maps to 34–112 (AEVELTIDGK…GMVVKTNSPL (79 aa)). [2Fe-2S] cluster-binding residues include Cys-68, Cys-79, Cys-82, and Cys-96. A 4Fe-4S His(Cys)3-ligated-type domain is found at 112 to 151 (LTHKAREGVMEFLLANHPLDCPICDQGGECDLQDQSMRYG). His-128, Cys-132, Cys-135, Cys-141, Cys-182, Cys-185, Cys-188, and Cys-232 together coordinate [4Fe-4S] cluster. Residues 251–307 (LKKTESIDVLDGLGSNIRVDTRGLEVMRILPRLNDEVNEEWINDKTRFACDGLKTQR) enclose the 4Fe-4S Mo/W bis-MGD-type domain.

This sequence belongs to the complex I 75 kDa subunit family. In terms of assembly, complex I is composed of about 40 different subunits. [2Fe-2S] cluster is required as a cofactor. It depends on [4Fe-4S] cluster as a cofactor.

The protein localises to the mitochondrion inner membrane. The enzyme catalyses a ubiquinone + NADH + 5 H(+)(in) = a ubiquinol + NAD(+) + 4 H(+)(out). Functionally, core subunit of the mitochondrial membrane respiratory chain NADH dehydrogenase (Complex I) that is believed to belong to the minimal assembly required for catalysis. Complex I functions in the transfer of electrons from NADH to the respiratory chain. The immediate electron acceptor for the enzyme is believed to be ubiquinone. This is the largest subunit of complex I and it is a component of the iron-sulfur (IP) fragment of the enzyme. It may form part of the active site crevice where NADH is oxidized. This Neurospora crassa (strain ATCC 24698 / 74-OR23-1A / CBS 708.71 / DSM 1257 / FGSC 987) protein is NADH-ubiquinone oxidoreductase 78 kDa subunit, mitochondrial (nuo78).